A 763-amino-acid polypeptide reads, in one-letter code: Heat shock 70 kDa protein 16 (763 aa).

Disordered regions lie at residues 509 to 529 (ISEE…PSSG) and 701 to 763 (EKTT…MELD). A Phosphoserine modification is found at serine 528. Residues 701 to 714 (EKTTEQESLPKDAN) show a composition bias toward basic and acidic residues.

Belongs to the heat shock protein 70 (TC 1.A.33) family. HSP110/SSE subfamily.

The polypeptide is Heat shock 70 kDa protein 16 (HSP70-16) (Arabidopsis thaliana (Mouse-ear cress)).